The following is a 224-amino-acid chain: Urease accessory protein UreG (224 aa).

Residues 1 to 20 (MATHSHPHSHTVPARPRRVR) show a composition bias toward basic residues. The segment at 1-25 (MATHSHPHSHTVPARPRRVRKPGEP) is disordered. Position 32–39 (32–39 (GPVGSGKT)) interacts with GTP.

Belongs to the SIMIBI class G3E GTPase family. UreG subfamily. Homodimer. UreD, UreF and UreG form a complex that acts as a GTP-hydrolysis-dependent molecular chaperone, activating the urease apoprotein by helping to assemble the nickel containing metallocenter of UreC. The UreE protein probably delivers the nickel.

The protein localises to the cytoplasm. In terms of biological role, facilitates the functional incorporation of the urease nickel metallocenter. This process requires GTP hydrolysis, probably effectuated by UreG. The chain is Urease accessory protein UreG from Mycobacterium bovis (strain ATCC BAA-935 / AF2122/97).